We begin with the raw amino-acid sequence, 295 residues long: ATP synthase gamma chain (295 aa).

It belongs to the ATPase gamma chain family. In terms of assembly, F-type ATPases have 2 components, CF(1) - the catalytic core - and CF(0) - the membrane proton channel. CF(1) has five subunits: alpha(3), beta(3), gamma(1), delta(1), epsilon(1). CF(0) has three main subunits: a, b and c.

The protein resides in the cell membrane. Functionally, produces ATP from ADP in the presence of a proton gradient across the membrane. The gamma chain is believed to be important in regulating ATPase activity and the flow of protons through the CF(0) complex. In Desulforudis audaxviator (strain MP104C), this protein is ATP synthase gamma chain.